The chain runs to 208 residues: Protein-L-isoaspartate O-methyltransferase (208 aa).

Ser-59 is an active-site residue.

Belongs to the methyltransferase superfamily. L-isoaspartyl/D-aspartyl protein methyltransferase family.

It is found in the cytoplasm. It carries out the reaction [protein]-L-isoaspartate + S-adenosyl-L-methionine = [protein]-L-isoaspartate alpha-methyl ester + S-adenosyl-L-homocysteine. Functionally, catalyzes the methyl esterification of L-isoaspartyl residues in peptides and proteins that result from spontaneous decomposition of normal L-aspartyl and L-asparaginyl residues. It plays a role in the repair and/or degradation of damaged proteins. In Vibrio cholerae serotype O1 (strain ATCC 39541 / Classical Ogawa 395 / O395), this protein is Protein-L-isoaspartate O-methyltransferase.